A 110-amino-acid chain; its full sequence is Coiled-coil-helix-coiled-coil-helix domain-containing protein 5 (110 aa).

The residue at position 1 (Met1) is an N-acetylmethionine. CHCH domains follow at residues 9 to 52 (ARYC…PIIR) and 55 to 97 (RQAC…QPPR). 4 consecutive short sequence motifs (cx9C motif) follow at residues 12–22 (CGRELEQYGQC), 34–44 (CHYLKMSIAQC), 58–68 (CAQPFEAFEEC), and 79–89 (CAEHMRRFLQC). 4 cysteine pairs are disulfide-bonded: Cys12–Cys44, Cys22–Cys34, Cys58–Cys89, and Cys68–Cys79.

In terms of assembly, monomer.

It localises to the mitochondrion intermembrane space. The sequence is that of Coiled-coil-helix-coiled-coil-helix domain-containing protein 5 (CHCHD5) from Homo sapiens (Human).